Here is a 287-residue protein sequence, read N- to C-terminus: 4-hydroxybenzoate octaprenyltransferase (287 aa).

6 helical membrane passes run 41–61, 89–109, 133–153, 158–178, 202–224, and 267–287; these read WPLLVIFSLGTLLMRSAGCAM, WEAIAIAVGLAFVSFLLILPL, FFAIPQAYLGIAFGFGIPMAF, DTVPTIAWVMLIANIFWSVAY, FGRFDVAAVMLCYAVTLGIYVWI, and NNWLGGVLFAGIAAHYLLAGS.

It belongs to the UbiA prenyltransferase family. The cofactor is Mg(2+).

It is found in the cell inner membrane. The enzyme catalyses all-trans-octaprenyl diphosphate + 4-hydroxybenzoate = 4-hydroxy-3-(all-trans-octaprenyl)benzoate + diphosphate. It participates in cofactor biosynthesis; ubiquinone biosynthesis. In terms of biological role, catalyzes the prenylation of para-hydroxybenzoate (PHB) with an all-trans polyprenyl group. Mediates the second step in the final reaction sequence of ubiquinone-8 (UQ-8) biosynthesis, which is the condensation of the polyisoprenoid side chain with PHB, generating the first membrane-bound Q intermediate 3-octaprenyl-4-hydroxybenzoate. In Burkholderia lata (strain ATCC 17760 / DSM 23089 / LMG 22485 / NCIMB 9086 / R18194 / 383), this protein is 4-hydroxybenzoate octaprenyltransferase.